A 421-amino-acid polypeptide reads, in one-letter code: 5-hydroxytryptamine receptor 2 (421 aa).

The Extracellular portion of the chain corresponds to 1 to 21 (MLCGRLRHTMNSTTCFFSHRT). Asn11 carries an N-linked (GlcNAc...) asparagine glycan. A helical transmembrane segment spans residues 22-42 (VLIGIVGSLIIAVSVVGNVLV). Topologically, residues 43 to 59 (CLAIFTEPILSHSKSKF) are cytoplasmic. The helical transmembrane segment at 60 to 79 (FIVSLAVADLLLALLVMTFA) threads the bilayer. At 80-95 (LVNSLYGYWLFGETFC) the chain is on the extracellular side. Cys95 and Cys210 form a disulfide bridge. The helical transmembrane segment at 96 to 118 (FIWMSADVMCETASIFSICVISY) threads the bilayer. The Cytoplasmic segment spans residues 119–138 (NRLKQVQKPLQYEEFMTTTR). The helical transmembrane segment at 139–160 (ALLIIASLWICSFVVSFVPFFL) threads the bilayer. Residues 161–213 (EWHELSMEEIKTIFKDLISDKVKTSDAHTFSFALEQTLGDNRTSNPKPECLFD) are Extracellular-facing. The helical transmembrane segment at 214 to 234 (VHFIYSVIYSLFCFYIPCTLM) threads the bilayer. The Cytoplasmic segment spans residues 235–274 (LRNYLRLFLIAKKHHVRIKNLHRLHRNQGTQGSKAARTLT). Residues 275-295 (IITGTFLACWLPFFIINPIEA) traverse the membrane as a helical segment. Over 296–304 (VDEHLIPLE) the chain is Extracellular. The chain crosses the membrane as a helical span at residues 305–325 (CFMVTIWLGYFNSCVNPIIYG). Over 326-421 (TSNSKFRAAF…MLSESDTVFS (96 aa)) the chain is Cytoplasmic.

Belongs to the G-protein coupled receptor 1 family. In terms of tissue distribution, central nervous system.

It is found in the cell membrane. This is one of the several different receptors for 5-hydroxytryptamine (serotonin). 5-HT plays important roles in various behavioral and physiological processes in aplysia. These include feeding, locomotion, circadian rhythm, learning and memory, synaptic plasticity, and synaptic growth. This receptor is mediated by G proteins that stimulate phospholipase C. The sequence is that of 5-hydroxytryptamine receptor 2 (5HTB2) from Aplysia californica (California sea hare).